Here is a 193-residue protein sequence, read N- to C-terminus: Thymidylate kinase (193 aa).

7–14 (GIDGCGKS) is a binding site for ATP.

This sequence belongs to the thymidylate kinase family.

The enzyme catalyses dTMP + ATP = dTDP + ADP. Phosphorylation of dTMP to form dTDP in both de novo and salvage pathways of dTTP synthesis. This chain is Thymidylate kinase, found in Coprothermobacter proteolyticus (strain ATCC 35245 / DSM 5265 / OCM 4 / BT).